The following is a 95-amino-acid chain: Co-chaperonin GroES (95 aa).

Belongs to the GroES chaperonin family. Heptamer of 7 subunits arranged in a ring. Interacts with the chaperonin GroEL.

The protein resides in the cytoplasm. Its function is as follows. Together with the chaperonin GroEL, plays an essential role in assisting protein folding. The GroEL-GroES system forms a nano-cage that allows encapsulation of the non-native substrate proteins and provides a physical environment optimized to promote and accelerate protein folding. GroES binds to the apical surface of the GroEL ring, thereby capping the opening of the GroEL channel. The polypeptide is Co-chaperonin GroES (Syntrophotalea carbinolica (strain DSM 2380 / NBRC 103641 / GraBd1) (Pelobacter carbinolicus)).